The chain runs to 832 residues: Protein P (832 aa).

Residues 1-177 are terminal protein domain (TP); it reads MPLSYQHFRK…FCGSPYSWEQ (177 aa). The tract at residues 178–335 is spacer; sequence ELQHGAESFH…YCLSHIVNLL (158 aa). Over residues 186-206 the composition is skewed to polar residues; it reads FHQQSSGILSRPSVGSSLQSK. Disordered stretches follow at residues 186 to 255 and 280 to 305; these read FHQQ…GHNA and TSEN…RSQS. Residues 210-220 show a composition bias toward low complexity; that stretch reads SRLGLQSQQGH. The polymerase/reverse transcriptase domain (RT) stretch occupies residues 336–679; that stretch reads EDWGPCAEHG…YLNLYPVARQ (344 aa). The Reverse transcriptase domain occupies 346 to 589; that stretch reads EHHIRIPRTP…YSLNFMGYVI (244 aa). Mg(2+) contacts are provided by Asp418, Asp540, and Asp541.

This sequence belongs to the hepadnaviridae P protein family.

It catalyses the reaction DNA(n) + a 2'-deoxyribonucleoside 5'-triphosphate = DNA(n+1) + diphosphate. It carries out the reaction Endonucleolytic cleavage to 5'-phosphomonoester.. With respect to regulation, activated by host HSP70 and HSP40 in vitro to be able to bind the epsilon loop of the pgRNA. Because deletion of the RNase H region renders the protein partly chaperone-independent, the chaperones may be needed indirectly to relieve occlusion of the RNA-binding site by this domain. Inhibited by several reverse-transcriptase inhibitors: Lamivudine, Adefovir and Entecavir. Functionally, multifunctional enzyme that converts the viral RNA genome into dsDNA in viral cytoplasmic capsids. This enzyme displays a DNA polymerase activity that can copy either DNA or RNA templates, and a ribonuclease H (RNase H) activity that cleaves the RNA strand of RNA-DNA heteroduplexes in a partially processive 3'- to 5'-endonucleasic mode. Neo-synthesized pregenomic RNA (pgRNA) are encapsidated together with the P protein, and reverse-transcribed inside the nucleocapsid. Initiation of reverse-transcription occurs first by binding the epsilon loop on the pgRNA genome, and is initiated by protein priming, thereby the 5'-end of (-)DNA is covalently linked to P protein. Partial (+)DNA is synthesized from the (-)DNA template and generates the relaxed circular DNA (RC-DNA) genome. After budding and infection, the RC-DNA migrates in the nucleus, and is converted into a plasmid-like covalently closed circular DNA (cccDNA). The activity of P protein does not seem to be necessary for cccDNA generation, and is presumably released from (+)DNA by host nuclear DNA repair machinery. This is Protein P from Hepatitis B virus genotype D subtype ayw (isolate Australia/AustKW/1991) (HBV-D).